Consider the following 353-residue polypeptide: tRNA N6-adenosine threonylcarbamoyltransferase (353 aa).

Fe cation-binding residues include His119 and His123. Residues Leu145–Gly149, Asp178, Gly191, and Asn285 contribute to the substrate site. Asp313 is a Fe cation binding site.

The protein belongs to the KAE1 / TsaD family. Fe(2+) serves as cofactor.

It localises to the cytoplasm. The enzyme catalyses L-threonylcarbamoyladenylate + adenosine(37) in tRNA = N(6)-L-threonylcarbamoyladenosine(37) in tRNA + AMP + H(+). Functionally, required for the formation of a threonylcarbamoyl group on adenosine at position 37 (t(6)A37) in tRNAs that read codons beginning with adenine. Is involved in the transfer of the threonylcarbamoyl moiety of threonylcarbamoyl-AMP (TC-AMP) to the N6 group of A37, together with TsaE and TsaB. TsaD likely plays a direct catalytic role in this reaction. The polypeptide is tRNA N6-adenosine threonylcarbamoyltransferase (Magnetococcus marinus (strain ATCC BAA-1437 / JCM 17883 / MC-1)).